The sequence spans 660 residues: Putative ABC transporter ATP-binding MG390 homolog (660 aa).

A Peptidase C39 domain is found at 6–126 (QEQPNECGIC…KQWTGYAATV (121 aa)). Cysteine 12 is an active-site residue. Transmembrane regions (helical) follow at residues 150 to 170 (LIIF…LLAT), 188 to 208 (IVVF…LYAL), 265 to 285 (HIPN…LIGI), 290 to 310 (FLWI…YDFF), 379 to 399 (SFAQ…GIIE), and 402 to 422 (YTLA…AYAT). Residues 464 to 660 (INLNNCSITL…INLSPYLQQT (197 aa)) form the ABC transporter domain. 494-501 (GENGSGKS) is a binding site for ATP.

It belongs to the ABC transporter superfamily.

It is found in the cell membrane. This is Putative ABC transporter ATP-binding MG390 homolog from Mycoplasma pneumoniae (strain ATCC 29342 / M129 / Subtype 1) (Mycoplasmoides pneumoniae).